Consider the following 87-residue polypeptide: NAD(P)H-quinone oxidoreductase subunit O (87 aa).

The span at 1-10 shows a compositional bias: basic and acidic residues; that stretch reads MSEQTGKVDD. The interval 1 to 23 is disordered; it reads MSEQTGKVDDSQSPPKVQKKLRK.

The protein belongs to the complex I NdhO subunit family. NDH-1 can be composed of about 15 different subunits; different subcomplexes with different compositions have been identified which probably have different functions.

Its subcellular location is the cellular thylakoid membrane. The enzyme catalyses a plastoquinone + NADH + (n+1) H(+)(in) = a plastoquinol + NAD(+) + n H(+)(out). It catalyses the reaction a plastoquinone + NADPH + (n+1) H(+)(in) = a plastoquinol + NADP(+) + n H(+)(out). NDH-1 shuttles electrons from an unknown electron donor, via FMN and iron-sulfur (Fe-S) centers, to quinones in the respiratory and/or the photosynthetic chain. The immediate electron acceptor for the enzyme in this species is believed to be plastoquinone. Couples the redox reaction to proton translocation, and thus conserves the redox energy in a proton gradient. Cyanobacterial NDH-1 also plays a role in inorganic carbon-concentration. In Prochlorococcus marinus (strain NATL2A), this protein is NAD(P)H-quinone oxidoreductase subunit O.